The chain runs to 428 residues: Dihydroorotase (428 aa).

Zn(2+) is bound by residues His59 and His61. Substrate contacts are provided by residues 61–63 (HLR) and Asn93. Positions 151, 178, and 231 each coordinate Zn(2+). Asn277 contacts substrate. Asp304 lines the Zn(2+) pocket. Asp304 is an active-site residue. Substrate is bound by residues His308 and 322–323 (FG).

Belongs to the metallo-dependent hydrolases superfamily. DHOase family. Class I DHOase subfamily. Zn(2+) serves as cofactor.

The catalysed reaction is (S)-dihydroorotate + H2O = N-carbamoyl-L-aspartate + H(+). The protein operates within pyrimidine metabolism; UMP biosynthesis via de novo pathway; (S)-dihydroorotate from bicarbonate: step 3/3. Catalyzes the reversible cyclization of carbamoyl aspartate to dihydroorotate. The protein is Dihydroorotase of Bacillus cereus (strain ATCC 10987 / NRS 248).